A 371-amino-acid chain; its full sequence is Protein OSB2, chloroplastic (371 aa).

The transit peptide at M1–R20 directs the protein to the chloroplast. Positions G45–E64 are disordered. Positions V97–Q195 constitute an SSB domain. PDF region stretches follow at residues W237–E289 and W312–P360.

Expressed in the floral abscission zone.

Its subcellular location is the plastid. The protein localises to the chloroplast. In terms of biological role, binds preferentially single-stranded DNA. Does not bind to RNA. This is Protein OSB2, chloroplastic (OSB2) from Arabidopsis thaliana (Mouse-ear cress).